Here is a 560-residue protein sequence, read N- to C-terminus: Oxygen-dependent choline dehydrogenase (560 aa).

6–35 (DYIIIGGGSAGSVLGGRLSEDVSNNVLVLE) is a binding site for FAD. Histidine 472 (proton acceptor) is an active-site residue.

Belongs to the GMC oxidoreductase family. Requires FAD as cofactor.

It catalyses the reaction choline + A = betaine aldehyde + AH2. The catalysed reaction is betaine aldehyde + NAD(+) + H2O = glycine betaine + NADH + 2 H(+). It participates in amine and polyamine biosynthesis; betaine biosynthesis via choline pathway; betaine aldehyde from choline (cytochrome c reductase route): step 1/1. Its function is as follows. Involved in the biosynthesis of the osmoprotectant glycine betaine. Catalyzes the oxidation of choline to betaine aldehyde and betaine aldehyde to glycine betaine at the same rate. In Staphylococcus xylosus, this protein is Oxygen-dependent choline dehydrogenase.